A 192-amino-acid polypeptide reads, in one-letter code: MEERNEQVVEEVKEEVKEAQVEEAVTSEDSEESVEEKSEAALLQEKVDELQAKLTETEGRMLRLQADFENYKRRVQMDKQAAEKYRAQSLVSDILPALDNFERAMQVEANDEQMKSLLQGMEMVYRQLLEAMTKEGVEAIEAVGKQFDPHEHQAVMQVEDSEFESNAVVEEFQKGYKLKDRVIRPSMVKVNQ.

The span at 1-20 shows a compositional bias: basic and acidic residues; the sequence is MEERNEQVVEEVKEEVKEAQ. The interval 1-39 is disordered; sequence MEERNEQVVEEVKEEVKEAQVEEAVTSEDSEESVEEKSE. Residues 25–34 are compositionally biased toward acidic residues; the sequence is VTSEDSEESV.

The protein belongs to the GrpE family. As to quaternary structure, homodimer.

The protein resides in the cytoplasm. In terms of biological role, participates actively in the response to hyperosmotic and heat shock by preventing the aggregation of stress-denatured proteins, in association with DnaK and GrpE. It is the nucleotide exchange factor for DnaK and may function as a thermosensor. Unfolded proteins bind initially to DnaJ; upon interaction with the DnaJ-bound protein, DnaK hydrolyzes its bound ATP, resulting in the formation of a stable complex. GrpE releases ADP from DnaK; ATP binding to DnaK triggers the release of the substrate protein, thus completing the reaction cycle. Several rounds of ATP-dependent interactions between DnaJ, DnaK and GrpE are required for fully efficient folding. This Bacillus cereus (strain ATCC 10987 / NRS 248) protein is Protein GrpE.